The sequence spans 209 residues: Peptidyl-tRNA hydrolase (209 aa).

Y14 contacts tRNA. H19 (proton acceptor) is an active-site residue. Residues Y68, N70, and N116 each coordinate tRNA.

Belongs to the PTH family. Monomer.

The protein resides in the cytoplasm. It catalyses the reaction an N-acyl-L-alpha-aminoacyl-tRNA + H2O = an N-acyl-L-amino acid + a tRNA + H(+). In terms of biological role, hydrolyzes ribosome-free peptidyl-tRNAs (with 1 or more amino acids incorporated), which drop off the ribosome during protein synthesis, or as a result of ribosome stalling. Its function is as follows. Catalyzes the release of premature peptidyl moieties from peptidyl-tRNA molecules trapped in stalled 50S ribosomal subunits, and thus maintains levels of free tRNAs and 50S ribosomes. This is Peptidyl-tRNA hydrolase from Phenylobacterium zucineum (strain HLK1).